The sequence spans 557 residues: Copine-6 (557 aa).

C2 domains lie at 1 to 127 (MSDP…TKPL) and 134 to 263 (TAGK…MQWD). Ca(2+)-binding residues include Asp167, Asp173, Asp229, Asp231, and Asp237. The linker region stretch occupies residues 244–303 (STFQEMQEGTANPGQEMQWDCINPKYRDKKKNYKSSGTVVLAQCTVEKVHTFLDYIMGGC). The VWFA domain maps to 306–526 (SFTVAIDFTA…ALAKCVLAEV (221 aa)).

Belongs to the copine family. As to quaternary structure, interacts (via second C2 domain) with OS9 (via C-terminus); this interaction occurs in a calcium-dependent manner in vitro. May interact with NECAB1. It depends on Ca(2+) as a cofactor. Expressed in the brain. Expressed in pyramidal cells, granule cells, and neurons in the dentate gyrus of the hippocampus and in granule cells of the olfactory bulb (at protein level). Expressed in pyramidal cells of the CA1-CA3 regions, in granule cells of the dentate gyrus, in granule cells of the olfactory bulbs, in the mitral cell layer and in neurons of the cerebral cortex layer II, brainstem and spinal cord. Not detected in glial cells.

The protein resides in the cytoplasm. It localises to the cell membrane. Its subcellular location is the endosome. The protein localises to the cytoplasmic vesicle. It is found in the clathrin-coated vesicle. The protein resides in the perikaryon. It localises to the cell projection. Its subcellular location is the dendrite. Calcium-dependent phospholipid-binding protein that plays a role in calcium-mediated intracellular processes. Binds phospholipid membranes in a calcium-dependent manner. Plays a role in dendrite formation by melanocytes. The sequence is that of Copine-6 from Mus musculus (Mouse).